Reading from the N-terminus, the 328-residue chain is D-cysteine desulfhydrase (328 aa).

K51 bears the N6-(pyridoxal phosphate)lysine mark.

This sequence belongs to the ACC deaminase/D-cysteine desulfhydrase family. Homodimer. It depends on pyridoxal 5'-phosphate as a cofactor.

The enzyme catalyses D-cysteine + H2O = hydrogen sulfide + pyruvate + NH4(+) + H(+). Catalyzes the alpha,beta-elimination reaction of D-cysteine and of several D-cysteine derivatives. It could be a defense mechanism against D-cysteine. The polypeptide is D-cysteine desulfhydrase (Escherichia coli O7:K1 (strain IAI39 / ExPEC)).